The chain runs to 1473 residues: Ovostatin (1473 aa).

Positions 1–36 (MHCFLGREILSFFCLTVRKMWLKFILAILLLHAAAG) are cleaved as a signal peptide. 13 N-linked (GlcNAc...) asparagine glycosylation sites follow: Asn67, Asn82, Asn89, Asn191, Asn342, Asn403, Asn527, Asn588, Asn757, Asn1141, Asn1221, Asn1315, and Asn1347.

This sequence belongs to the protease inhibitor I39 (alpha-2-macroglobulin) family. In terms of assembly, homotetramer, which consists of two pairs of disulfide-linked chains. In terms of processing, lacks the thioester bond found in other members of this family. Glycosylated; contains 56 glucosamine units per subunit.

It localises to the secreted. Is able to inhibit all four classes of proteinases by a unique 'trapping' mechanism. This protein has a peptide stretch, called the 'bait region' which contains specific cleavage sites for different proteinases. When a proteinase cleaves the bait region, a conformational change is induced in the protein which traps the proteinase. The entrapped enzyme remains active against low molecular weight substrates (activity against high molecular weight substrates is greatly reduced). The sequence is that of Ovostatin from Gallus gallus (Chicken).